Here is a 1290-residue protein sequence, read N- to C-terminus: Sorbin and SH3 domain-containing protein 1 (1290 aa).

3 disordered regions span residues 1–211 (MSSE…LSDV), 238–271 (HKLN…SKSE), and 286–313 (TLPL…KKVD). Low complexity predominate over residues 45 to 61 (SSSYRGTPSSSPVSPQE). T51 carries the phosphothreonine modification. Phosphoserine is present on residues S55, S58, and S62. Residues 62–71 (SPKHESKSGL) show a composition bias toward basic and acidic residues. Polar residues-rich tracts occupy residues 83-95 (LSSS…NAQP) and 123-153 (EVSS…TIVN). A compositionally biased stretch (basic and acidic residues) spans 161-173 (HNRDPASERRAGE). Phosphoserine occurs at positions 164 and 175. A Phosphothreonine modification is found at T179. Phosphoserine occurs at positions 185, 194, 204, 209, 254, 261, 270, and 288. The segment covering 189 to 199 (ASERRAKDASR) has biased composition (basic and acidic residues). Residues 202-247 (VRSAQDLSDVSTDEVGIPLRNTERSKDWYKTMFKQIHKLNRDDDSD) enclose the SoHo domain. Residues 240–260 (LNRDDDSDVHSPRYSFSDDTK) show a composition bias toward basic and acidic residues. Basic and acidic residues predominate over residues 299-313 (SPERNDWEPLDKKVD). A Phosphotyrosine; by ABL1 modification is found at Y325. Residues S345, P346, Y357, S376, and S407 each carry the phosphoserine modification. The segment at 389 to 416 (VETVNKSPSANSPQSSAVSPTPDITSEP) is disordered. Residues 392–412 (VNKSPSANSPQSSAVSPTPDI) show a composition bias toward polar residues. Y421 bears the Phosphotyrosine; by ABL1 mark. Phosphoserine is present on residues S432 and S470. 6 disordered regions span residues 463-482 (LSGL…RKGG), 588-607 (YDSK…SSRR), 697-739 (SLDF…EMDG), 783-803 (VSND…PKHR), 822-841 (RKHE…SRGD), and 862-972 (PLQQ…SPRH). T475 is subject to Phosphothreonine. Polar residues-rich tracts occupy residues 595–606 (TMSLQEYGTSSR) and 704–722 (LSKS…SARS). S969 is modified (phosphoserine). SH3 domains are found at residues 1049-1108 (LEMR…LLPP) and 1123-1184 (LEYG…VLKR). The residue at position 1189 (T1189) is a Phosphothreonine. 2 positions are modified to phosphotyrosine: Y1193 and Y1198. Residues 1198-1210 (YSSSPSRSATVSP) are compositionally biased toward low complexity. The tract at residues 1198–1227 (YSSSPSRSATVSPQQPQAQQRRVTPDRSQP) is disordered. A phosphoserine mark is found at S1201 and S1209. Polar residues predominate over residues 1211–1227 (QQPQAQQRRVTPDRSQP). Residues 1229–1290 (LDLCSYQALY…PGNYVKPLYL (62 aa)) enclose the SH3 3 domain. Y1238 carries the phosphotyrosine; by ABL1 modification.

In terms of assembly, interacts (via SH3 domain 2) with PXN. Interacts with the long isoform of AFDN and with VCL. AFDN and VCL bind to SORBS1 in a competitive manner and do not form a ternary complex. Interacts with ABL1, CBL, CBLB and INPPL1/SHIP2 through the third SH3 domain. Interaction with ABL1 occurs only after insulin stimulation while this has no effect on the interaction with INPPL1. Interacts with the insulin receptor but dissociates from it following insulin stimulation. Also interacts with SCA7, PTK2/FAK1 and flotillin. Interacts (via third SH3 domain) with the Ten-1 ICD form of TENM1; the interaction induces the translocation of SORBS1 to the nucleus. Interacts with INSM1. In terms of processing, O-glycosylated. In terms of tissue distribution, expressed in all tissues tested: heart, brain, spleen, lung, liver, muscle, kidney and testis. Expressed in 3T3-L1 adipocytes but not in 3T3-L1 fibroblasts.

It is found in the cell junction. The protein resides in the adherens junction. Its subcellular location is the cell membrane. It localises to the cytoplasm. The protein localises to the cytoskeleton. It is found in the focal adhesion. The protein resides in the nucleus. Its subcellular location is the nucleus matrix. Functionally, plays a role in tyrosine phosphorylation of CBL by linking CBL to the insulin receptor. Required for insulin-stimulated glucose transport. Involved in formation of actin stress fibers and focal adhesions. In Mus musculus (Mouse), this protein is Sorbin and SH3 domain-containing protein 1.